A 184-amino-acid chain; its full sequence is Bifunctional protein PyrR (184 aa).

The short motif at 98 to 110 is the PRPP-binding element; it reads VVLVDDVLYTGRT.

This sequence belongs to the purine/pyrimidine phosphoribosyltransferase family. PyrR subfamily.

It carries out the reaction UMP + diphosphate = 5-phospho-alpha-D-ribose 1-diphosphate + uracil. Regulates the transcription of the pyrimidine nucleotide (pyr) operon in response to exogenous pyrimidines. Functionally, also displays a weak uracil phosphoribosyltransferase activity which is not physiologically significant. In Roseiflexus castenholzii (strain DSM 13941 / HLO8), this protein is Bifunctional protein PyrR.